We begin with the raw amino-acid sequence, 1700 residues long: MPPKPKQKAKQPSQQPPPPPPPAAAQLIEDILSSDEEEGGVKLPTKSSVKNALKKVKKERDRELIRQLKDQQDMELEALQAIFNDEFITMDPIIINRNMDTIIEGIKPIRESARFRITIKPYVGDDEKCFVSIYLVVGFPEKYPVVLPSIQVLVNKGLPQKKAIELEEKLIRESQGKIGNIMIFDLCEIAKDFLNENNFEPTQSIHHDFRSHQQKISIEISTNEQQQQQLQQLQQLQLQYNNDTKKEWESTLEESQLKEDRKNYRLQKSIQRAQYEKERKKTIVNEFTNGPQSKLSKQQRNIDYSIDHSINNNNNNNNNAFNNFNNNNNNNNTNNSNVSSIDNKTIDKQQTMILHLLRLLCQNDSNITNDHIKTLGEQLVQMGIFNRNHLSLLNMHNSNDNQIYQHIFQDYFLKQFNDISLSDLKNNVDSAANNSGHFLNKFWDTLNKTNENSGLKKSPSTFEYSGEGGGGGVGGGSSQKTINPHQQSRYHSDFEEIQLLGRGGFGQVVKVRNKLDGRYYAIKKIKLDSNQSLNRRILREVITLSRLHHQHVVRYYQAWIESAESLSLTNDNSDDDDDDDDEFESGSESEESQSESESESSESEESSESEESSESSESEESEESEYSDDSEFESEENNDFDQSFSEVFLFQNGNKRSLEFDLTDDSYSFLHSDCGFLLEVFDLNNKIGGNNTRSMGSSNQHLQQQQQQNQSQQQKKQPQQNQSQQQKKLKNSNSKSKSKSKSKSKSKSKSNSKKSISSSKLKNIKKSTSIPYLYIQMEYCQKILRNLTETGMNLEDDDIWKLFRQIVEGMAYVHGQGIIHRDLKPSNIFFDSCGDIKIGDFGLAINNKTTSTLSPTTNINSSTSSAGSLTTSSNSVQSVINTKQQQQQQQPQNYWEDEVEGQQQQQQQQQQQQQQQQQQQQQQQQHTARVGTLFYTSPEQEAGTNGDSAYDDKVDMYSLGIVFFEMWYVFSTGHERVIVLRNLREKFEFPSDFERNHSRQATLIRMLIDKDPAKRPSAQQLLQSELMPPKMEDEYIKNSIRVITNPTNQFYQTMLNSLFSQNHQHLHSHIYHHQQSSVTSSSYSKSLFCSLDLLQVKQLVDDVIITILKKHNANEMLTPQMSIIKEWNEQPNLFNNSSSSSSTTTTTSTTNTANNTNSVVINKSTSTSNINKVSNKTGKSILMDDSGQLLELRHDLRVSFKSFIETEFLNLGDHYKHHHQQQNDVRHDNSSNGNSNNNNSNDRHHDQDKSNTTTRSVDEILELLSKAPIKRYEFGHVFRKPHLVGKLPKELSQFCFDVFGSSSLYSDAETIKVTTEIFDSLPSTQNFYFVRLNHFGIVEYMWKFIGITDLTLKNEISQVVSQLIRQPWFTVKKVLLEKFKLPLKQVERIANWVLVKGTIPDVLKKLDASQNNNPLLSGNGSLGNNNNNNNNNNNVRISSSFTDLLEDIRQLAVYFEKMSISPHKVIFDLSYCFSENFYSTGIMFQVILKEEKHECLAVGGRYDSPLNLNNSNNSSSSSSSSSSNNNNSYNNYNNNNNYNYNYYSNCYLTNFNLPITGLSVAMDKVYSRERELYSQKRRQQLPPTLSSESQMIAHKFSTPDIFVISLGPNLFLERIGIVGDLCNAGFNAETMYIENPTPEEQQDASITSGALYIITIKEKGAKKTIKVKNIEKRREDDVSRDEIVKFFTLSNFNSKSRLNI.

The disordered stretch occupies residues 1-25; sequence MPPKPKQKAKQPSQQPPPPPPPAAA. Positions 14–23 are enriched in pro residues; sequence QQPPPPPPPA. An RWD domain is found at 74–197; the sequence is MELEALQAIF…EIAKDFLNEN (124 aa). Positions 454–463 are enriched in polar residues; it reads GLKKSPSTFE. Residues 454–488 are disordered; sequence GLKKSPSTFEYSGEGGGGGVGGGSSQKTINPHQQS. Residues 466–477 show a composition bias toward gly residues; sequence GEGGGGGVGGGS. Over residues 479 to 488 the composition is skewed to polar residues; sequence QKTINPHQQS. The 534-residue stretch at 494 to 1027 folds into the Protein kinase domain; that stretch reads FEEIQLLGRG…AQQLLQSELM (534 aa). ATP contacts are provided by residues 500 to 508 and Lys-523; that span reads LGRGGFGQV. 2 disordered regions span residues 568–639 and 689–760; these read LTND…ENND and GNNT…SSSK. Residues 572 to 639 show a composition bias toward acidic residues; the sequence is NSDDDDDDDD…SEFESEENND (68 aa). Residues 697 to 735 show a composition bias toward low complexity; sequence SSNQHLQQQQQQNQSQQQKKQPQQNQSQQQKKLKNSNSK. Residues 736 to 752 are compositionally biased toward basic residues; the sequence is SKSKSKSKSKSKSKSNS. The active-site Proton acceptor is the Asp-822. Composition is skewed to low complexity over residues 850–875, 1135–1158, 1230–1240, and 1509–1531; these read TSTL…SSNS, NNSS…NTNS, SSNGNSNNNNS, and NNSN…SYNN. Disordered regions lie at residues 850–901, 1134–1160, 1216–1253, and 1507–1531; these read TSTL…EVEG, FNNS…NSVV, KHHH…SNTT, and NLNN…SYNN.

It belongs to the protein kinase superfamily. Ser/Thr protein kinase family. GCN2 subfamily.

It catalyses the reaction L-seryl-[protein] + ATP = O-phospho-L-seryl-[protein] + ADP + H(+). The enzyme catalyses L-threonyl-[protein] + ATP = O-phospho-L-threonyl-[protein] + ADP + H(+). This is Probable serine/threonine-protein kinase ifkC (ifkC) from Dictyostelium discoideum (Social amoeba).